The sequence spans 707 residues: Matrix metalloproteinase-9 (707 aa).

The signal sequence occupies residues 1-19 (MSPRQPLVLALLVLGCCSA). Positions 20–106 (APRRRQPTLV…PRCGVPDVGK (87 aa)) are cleaved as a propeptide — activation peptide. N88 carries N-linked (GlcNAc...) asparagine glycosylation. The Cysteine switch motif lies at 97 to 104 (PRCGVPDV). C99 lines the Zn(2+) pocket. N-linked (GlcNAc...) asparagine glycans are attached at residues N120 and N127. Ca(2+)-binding residues include D131 and D165. Positions 175 and 177 each coordinate Zn(2+). Residues D182, G183, D185, and L187 each contribute to the Ca(2+) site. H190 is a binding site for Zn(2+). Ca(2+)-binding residues include G197, Q199, and D201. A Zn(2+)-binding site is contributed by H203. D205, D206, and E208 together coordinate Ca(2+). Fibronectin type-II domains lie at 225-273 (ADGA…FCPS), 283-331 (ADGK…FCPT), and 342-390 (SAGE…FCPD). Disulfide bonds link C230/C256, C244/C271, C288/C314, C302/C329, C347/C373, and C361/C388. H401 is a Zn(2+) binding site. Residue E402 is part of the active site. Positions 405 and 411 each coordinate Zn(2+). Residues 437–508 (RGIQHLYGPN…ASPSAAPTAS (72 aa)) are disordered. Pro residues predominate over residues 446-467 (NPNPQPPATTTPEPQPTAPPTA). The span at 481–493 (PTTSPTGAPSAGP) shows a compositional bias: low complexity. A disulfide bridge connects residues C516 and C704. Hemopexin repeat units lie at residues 518–563 (VNVF…WPAL), 564–608 (PAKL…GLGP), 610–657 (VPHV…FPGV), and 658–704 (PLNT…ILHC).

The protein belongs to the peptidase M10A family. As to quaternary structure, exists as monomer or homodimer; disulfide-linked. Also exists as heterodimer with LCN2. Macrophages and transformed cell lines produce only the monomeric form. Interacts with ECM1. Zn(2+) is required as a cofactor. Requires Ca(2+) as cofactor. In terms of processing, N- and O-glycosylated. Osteoclasts.

It is found in the secreted. Its subcellular location is the extracellular space. The protein resides in the extracellular matrix. It carries out the reaction Cleavage of gelatin types I and V and collagen types IV and V.. Its function is as follows. Matrix metalloproteinase that plays an essential role in local proteolysis of the extracellular matrix and in leukocyte migration. Could play a role in bone osteoclastic resorption. Cleaves KiSS1 at a Gly-|-Leu bond. Cleaves NINJ1 to generate the Secreted ninjurin-1 form. Cleaves type IV and type V collagen into large C-terminal three quarter fragments and shorter N-terminal one quarter fragments. Degrades fibronectin but not laminin or Pz-peptide. In Oryctolagus cuniculus (Rabbit), this protein is Matrix metalloproteinase-9.